A 142-amino-acid polypeptide reads, in one-letter code: Transcriptional regulator MraZ (142 aa).

SpoVT-AbrB domains lie at A5–E51 and A77–T120.

It belongs to the MraZ family. In terms of assembly, forms oligomers.

Its subcellular location is the cytoplasm. The protein resides in the nucleoid. This chain is Transcriptional regulator MraZ, found in Burkholderia multivorans (strain ATCC 17616 / 249).